A 391-amino-acid polypeptide reads, in one-letter code: Methionine import ATP-binding protein MetN 2 (391 aa).

In terms of domain architecture, ABC transporter spans 44 to 280; the sequence is VHVGKVFATP…PRHGATRALL (237 aa). 77-84 contacts ATP; the sequence is GRSGAGKS.

The protein belongs to the ABC transporter superfamily. Methionine importer (TC 3.A.1.24) family. As to quaternary structure, the complex is composed of two ATP-binding proteins (MetN), two transmembrane proteins (MetI) and a solute-binding protein (MetQ).

Its subcellular location is the cell inner membrane. The catalysed reaction is L-methionine(out) + ATP + H2O = L-methionine(in) + ADP + phosphate + H(+). It catalyses the reaction D-methionine(out) + ATP + H2O = D-methionine(in) + ADP + phosphate + H(+). In terms of biological role, part of the ABC transporter complex MetNIQ involved in methionine import. Responsible for energy coupling to the transport system. This is Methionine import ATP-binding protein MetN 2 from Burkholderia ambifaria (strain ATCC BAA-244 / DSM 16087 / CCUG 44356 / LMG 19182 / AMMD) (Burkholderia cepacia (strain AMMD)).